The following is a 187-amino-acid chain: Large ribosomal subunit protein bL21 (187 aa).

A disordered region spans residues 157 to 187 (KVAKKAVKKTVKKATKTGAKKKAAKKTSKKA).

It belongs to the bacterial ribosomal protein bL21 family. As to quaternary structure, part of the 50S ribosomal subunit. Contacts protein L20.

This protein binds to 23S rRNA in the presence of protein L20. In Bdellovibrio bacteriovorus (strain ATCC 15356 / DSM 50701 / NCIMB 9529 / HD100), this protein is Large ribosomal subunit protein bL21.